The primary structure comprises 231 residues: Putative 3-methyladenine DNA glycosylase (231 aa).

It belongs to the DNA glycosylase MPG family.

This is Putative 3-methyladenine DNA glycosylase from Pseudomonas fluorescens (strain Pf0-1).